The sequence spans 293 residues: Energy-coupling factor transporter ATP-binding protein EcfA2 (293 aa).

The 244-residue stretch at 3 to 246 (ITFQKVEHRY…ADELEKIGVD (244 aa)) folds into the ABC transporter domain. 40–47 (GHTGSGKS) serves as a coordination point for ATP.

It belongs to the ABC transporter superfamily. Energy-coupling factor EcfA family. As to quaternary structure, forms a stable energy-coupling factor (ECF) transporter complex composed of 2 membrane-embedded substrate-binding proteins (S component), 2 ATP-binding proteins (A component) and 2 transmembrane proteins (T component).

It is found in the cell membrane. Functionally, ATP-binding (A) component of a common energy-coupling factor (ECF) ABC-transporter complex. Unlike classic ABC transporters this ECF transporter provides the energy necessary to transport a number of different substrates. In Bacillus anthracis, this protein is Energy-coupling factor transporter ATP-binding protein EcfA2.